The chain runs to 136 residues: Small ribosomal subunit protein uS19 (136 aa).

Belongs to the universal ribosomal protein uS19 family.

Protein S19 forms a complex with S13 that binds strongly to the 16S ribosomal RNA. The polypeptide is Small ribosomal subunit protein uS19 (Methanocorpusculum labreanum (strain ATCC 43576 / DSM 4855 / Z)).